Consider the following 201-residue polypeptide: MLRKVVRDARLRARVLERVEEFRLNKRASERVWFRELVLCILTANSSFIGAFTALQYLGDLILYGSIEEISSALKNAGYRFPNLKARYIIESRSYYGKLREIGRVADRDQIEAREILLEIKGLGMKEASHFLRNMGYLDLAIIDRHILRFFSDYLEDQKISSKSKYFELESVFRSIASALDLPVGVLDLYVWYLKTGKLAK.

Active-site residues include K126 and D144.

This sequence belongs to the type-2 OGG1 family.

The catalysed reaction is 2'-deoxyribonucleotide-(2'-deoxyribose 5'-phosphate)-2'-deoxyribonucleotide-DNA = a 3'-end 2'-deoxyribonucleotide-(2,3-dehydro-2,3-deoxyribose 5'-phosphate)-DNA + a 5'-end 5'-phospho-2'-deoxyribonucleoside-DNA + H(+). Functionally, catalyzes the excision of an oxidatively damaged form of guanine (7,8-dihydro-8-oxoguanine = 8-oxoG) from DNA. Also cleaves the DNA backbone at apurinic/apyrimidinic sites (AP sites). This is 8-oxoguanine DNA glycosylase/AP lyase from Metallosphaera sedula (strain ATCC 51363 / DSM 5348 / JCM 9185 / NBRC 15509 / TH2).